A 141-amino-acid chain; its full sequence is Small ribosomal subunit protein uS19 (141 aa).

It belongs to the universal ribosomal protein uS19 family.

Protein S19 forms a complex with S13 that binds strongly to the 16S ribosomal RNA. This is Small ribosomal subunit protein uS19 from Thermofilum pendens (strain DSM 2475 / Hrk 5).